Reading from the N-terminus, the 94-residue chain is Co-chaperonin GroES (94 aa).

Belongs to the GroES chaperonin family. As to quaternary structure, heptamer of 7 subunits arranged in a ring. Interacts with the chaperonin GroEL.

Its subcellular location is the cytoplasm. Its function is as follows. Together with the chaperonin GroEL, plays an essential role in assisting protein folding. The GroEL-GroES system forms a nano-cage that allows encapsulation of the non-native substrate proteins and provides a physical environment optimized to promote and accelerate protein folding. GroES binds to the apical surface of the GroEL ring, thereby capping the opening of the GroEL channel. This is Co-chaperonin GroES from Bacillus mycoides (strain KBAB4) (Bacillus weihenstephanensis).